The primary structure comprises 178 residues: Large ribosomal subunit protein uL6 (178 aa).

This sequence belongs to the universal ribosomal protein uL6 family. In terms of assembly, part of the 50S ribosomal subunit.

In terms of biological role, this protein binds to the 23S rRNA, and is important in its secondary structure. It is located near the subunit interface in the base of the L7/L12 stalk, and near the tRNA binding site of the peptidyltransferase center. This chain is Large ribosomal subunit protein uL6, found in Nitrosococcus oceani (strain ATCC 19707 / BCRC 17464 / JCM 30415 / NCIMB 11848 / C-107).